We begin with the raw amino-acid sequence, 591 residues long: Aspartate--tRNA ligase (591 aa).

Glutamate 171 serves as a coordination point for L-aspartate. The interval 195–198 (QLFK) is aspartate. Position 217 (arginine 217) interacts with L-aspartate. Residues 217–219 (RDE) and glutamine 226 each bind ATP. Residue histidine 448 coordinates L-aspartate. Glutamate 482 contributes to the ATP binding site. An L-aspartate-binding site is contributed by arginine 489. Residue 534-537 (GLDR) coordinates ATP.

This sequence belongs to the class-II aminoacyl-tRNA synthetase family. Type 1 subfamily. Homodimer.

The protein resides in the cytoplasm. The enzyme catalyses tRNA(Asp) + L-aspartate + ATP = L-aspartyl-tRNA(Asp) + AMP + diphosphate. Catalyzes the attachment of L-aspartate to tRNA(Asp) in a two-step reaction: L-aspartate is first activated by ATP to form Asp-AMP and then transferred to the acceptor end of tRNA(Asp). The sequence is that of Aspartate--tRNA ligase from Aliivibrio salmonicida (strain LFI1238) (Vibrio salmonicida (strain LFI1238)).